Here is a 438-residue protein sequence, read N- to C-terminus: Gamma-glutamyl phosphate reductase (438 aa).

This sequence belongs to the gamma-glutamyl phosphate reductase family.

It is found in the cytoplasm. The enzyme catalyses L-glutamate 5-semialdehyde + phosphate + NADP(+) = L-glutamyl 5-phosphate + NADPH + H(+). The protein operates within amino-acid biosynthesis; L-proline biosynthesis; L-glutamate 5-semialdehyde from L-glutamate: step 2/2. Its function is as follows. Catalyzes the NADPH-dependent reduction of L-glutamate 5-phosphate into L-glutamate 5-semialdehyde and phosphate. The product spontaneously undergoes cyclization to form 1-pyrroline-5-carboxylate. The chain is Gamma-glutamyl phosphate reductase from Prochlorococcus marinus (strain MIT 9313).